Here is a 537-residue protein sequence, read N- to C-terminus: CTP synthase (537 aa).

Residues 1-267 (MTNTKFVFVT…ISVLEERLFG (267 aa)) form an amidoligase domain region. Ser15 contacts CTP. Ser15 contacts UTP. 16–21 (SVGKGI) contributes to the ATP binding site. Tyr56 is a binding site for L-glutamine. Asp73 provides a ligand contact to ATP. Residues Asp73 and Glu141 each coordinate Mg(2+). CTP contacts are provided by residues 148–150 (DIE), 188–193 (KTKPTQ), and Lys224. UTP contacts are provided by residues 188–193 (KTKPTQ) and Lys224. The Glutamine amidotransferase type-1 domain occupies 297–535 (YVVLPDAYLS…LSEAVAKASP (239 aa)). Gly355 contributes to the L-glutamine binding site. The Nucleophile; for glutamine hydrolysis role is filled by Cys382. Residues 383–386 (LGMQ), Glu406, and Arg463 each bind L-glutamine. Catalysis depends on residues His508 and Glu510.

This sequence belongs to the CTP synthase family. In terms of assembly, homotetramer.

It carries out the reaction UTP + L-glutamine + ATP + H2O = CTP + L-glutamate + ADP + phosphate + 2 H(+). The catalysed reaction is L-glutamine + H2O = L-glutamate + NH4(+). The enzyme catalyses UTP + NH4(+) + ATP = CTP + ADP + phosphate + 2 H(+). The protein operates within pyrimidine metabolism; CTP biosynthesis via de novo pathway; CTP from UDP: step 2/2. Allosterically activated by GTP, when glutamine is the substrate; GTP has no effect on the reaction when ammonia is the substrate. The allosteric effector GTP functions by stabilizing the protein conformation that binds the tetrahedral intermediate(s) formed during glutamine hydrolysis. Inhibited by the product CTP, via allosteric rather than competitive inhibition. Its function is as follows. Catalyzes the ATP-dependent amination of UTP to CTP with either L-glutamine or ammonia as the source of nitrogen. Regulates intracellular CTP levels through interactions with the four ribonucleotide triphosphates. The protein is CTP synthase of Coprothermobacter proteolyticus (strain ATCC 35245 / DSM 5265 / OCM 4 / BT).